Consider the following 1141-residue polypeptide: Putative late blight resistance protein homolog R1B-13 (1141 aa).

A coiled-coil region spans residues 417–437 (DSLAFLKNQIQVIQMEFEILQ). One can recognise an NB-ARC domain in the interval 516–742 (TVITHTSSQL…LSIVLVADVL (227 aa)). LRR repeat units follow at residues 826–851 (FKFLKVLDLEHQVVIDFIPTELPYLR), 869–894 (LWNLETLILKGTSAKTLLLPSTVWDM), 992–1016 (APNLKYLKLSGYYLDSQYLSETVDH), 1017–1041 (LKHLEVLKLYNVEFGDYREWEVSNG), and 1043–1068 (FPQLKILKLENLSLMKWIVADDAFPI).

This sequence belongs to the disease resistance NB-LRR family.

Its subcellular location is the cytoplasm. It is found in the membrane. Its function is as follows. Confers resistance to late blight (Phytophthora infestans) races carrying the avirulence gene Avr1. Resistance proteins guard the plant against pathogens that contain an appropriate avirulence protein via an indirect interaction with this avirulence protein. That triggers a defense system including the hypersensitive response, which restricts the pathogen growth. This chain is Putative late blight resistance protein homolog R1B-13 (R1B-13), found in Solanum demissum (Wild potato).